We begin with the raw amino-acid sequence, 407 residues long: Peptidase T (407 aa).

Zn(2+) is bound at residue His78. Asp80 is a catalytic residue. A Zn(2+)-binding site is contributed by Asp139. Glu173 serves as the catalytic Proton acceptor. Zn(2+) contacts are provided by Glu174, Asp196, and His378.

Belongs to the peptidase M20B family. Zn(2+) is required as a cofactor.

The protein localises to the cytoplasm. The catalysed reaction is Release of the N-terminal residue from a tripeptide.. In terms of biological role, cleaves the N-terminal amino acid of tripeptides. The chain is Peptidase T from Shewanella halifaxensis (strain HAW-EB4).